The sequence spans 216 residues: GTP cyclohydrolase 1 (216 aa).

3 residues coordinate Zn(2+): C108, H111, and C179.

Belongs to the GTP cyclohydrolase I family. Toroid-shaped homodecamer, composed of two pentamers of five dimers.

The catalysed reaction is GTP + H2O = 7,8-dihydroneopterin 3'-triphosphate + formate + H(+). It functions in the pathway cofactor biosynthesis; 7,8-dihydroneopterin triphosphate biosynthesis; 7,8-dihydroneopterin triphosphate from GTP: step 1/1. The protein is GTP cyclohydrolase 1 of Shewanella oneidensis (strain ATCC 700550 / JCM 31522 / CIP 106686 / LMG 19005 / NCIMB 14063 / MR-1).